The chain runs to 260 residues: Uroplakin-1b (260 aa).

Topologically, residues 1-15 are cytoplasmic; sequence MAKDDSTVRCFQGLL. A helical membrane pass occupies residues 16–36; it reads IFGHVIVGMCGIALTAECIFF. At 37–59 the chain is on the extracellular side; it reads VSDQHSLYPLLEATNNDDIFGAA. Residues 60 to 80 form a helical membrane-spanning segment; that stretch reads WIGMFVGICLFCLSVLAIVGI. Residues 81 to 86 are Cytoplasmic-facing; sequence MKSNRK. A helical membrane pass occupies residues 87-107; sequence ILLAYFIMMFIVYGFEVASCI. At 108-229 the chain is on the extracellular side; sequence TAATQRDFFT…ELISGPMDRH (122 aa). A helical membrane pass occupies residues 230-250; the sequence is AWGVAWFGFAILCWTFWVLLG. At 251 to 260 the chain is on the cytoplasmic side; it reads TMFYWSRIEY.

Belongs to the tetraspanin (TM4SF) family. As to quaternary structure, heterodimer with uroplakin-3A (UPK3A) or uroplakin-3B (UPK3B). In terms of processing, N-glycosylated with high-mannose oligosaccharides.

The protein resides in the membrane. In terms of biological role, component of the asymmetric unit membrane (AUM); a highly specialized biomembrane elaborated by terminally differentiated urothelial cells. May play an important role in normal bladder epithelial physiology, possibly in regulating membrane permeability of superficial umbrella cells or in stabilizing the apical membrane through AUM/cytoskeletal interactions. The polypeptide is Uroplakin-1b (Upk1b) (Rattus norvegicus (Rat)).